We begin with the raw amino-acid sequence, 360 residues long: DNA replication and repair protein RecF (360 aa).

Residue Gly-30–Thr-37 coordinates ATP.

Belongs to the RecF family.

It is found in the cytoplasm. In terms of biological role, the RecF protein is involved in DNA metabolism; it is required for DNA replication and normal SOS inducibility. RecF binds preferentially to single-stranded, linear DNA. It also seems to bind ATP. This is DNA replication and repair protein RecF from Deinococcus deserti (strain DSM 17065 / CIP 109153 / LMG 22923 / VCD115).